Reading from the N-terminus, the 201-residue chain is Peptidyl-tRNA hydrolase (201 aa).

Y14 lines the tRNA pocket. The active-site Proton acceptor is H19. Positions 64, 66, and 112 each coordinate tRNA.

Belongs to the PTH family. In terms of assembly, monomer.

It localises to the cytoplasm. It carries out the reaction an N-acyl-L-alpha-aminoacyl-tRNA + H2O = an N-acyl-L-amino acid + a tRNA + H(+). Its function is as follows. Hydrolyzes ribosome-free peptidyl-tRNAs (with 1 or more amino acids incorporated), which drop off the ribosome during protein synthesis, or as a result of ribosome stalling. Functionally, catalyzes the release of premature peptidyl moieties from peptidyl-tRNA molecules trapped in stalled 50S ribosomal subunits, and thus maintains levels of free tRNAs and 50S ribosomes. This chain is Peptidyl-tRNA hydrolase, found in Bradyrhizobium diazoefficiens (strain JCM 10833 / BCRC 13528 / IAM 13628 / NBRC 14792 / USDA 110).